Reading from the N-terminus, the 248-residue chain is Adenosylcobinamide-GDP ribazoletransferase (248 aa).

The next 7 helical transmembrane spans lie at 24-44 (EINLKKGSALLPFVGVIIGAW), 70-90 (VIITGGFHVDALADTADGLFS), 106-126 (VGANGVIAICFYFLFYGALFL), 134-154 (ICWLFFVLPIVAKGVTMLLFA), 168-188 (IFLGVPWWPIVIAQVIVLAVL), 189-209 (GLFFSYVGVIAYVGVILFTII), and 228-248 (AGGQMGQLICLFCLVLLWGLV).

Belongs to the CobS family. Requires Mg(2+) as cofactor.

The protein localises to the cell membrane. The catalysed reaction is alpha-ribazole + adenosylcob(III)inamide-GDP = adenosylcob(III)alamin + GMP + H(+). It carries out the reaction alpha-ribazole 5'-phosphate + adenosylcob(III)inamide-GDP = adenosylcob(III)alamin 5'-phosphate + GMP + H(+). It functions in the pathway cofactor biosynthesis; adenosylcobalamin biosynthesis; adenosylcobalamin from cob(II)yrinate a,c-diamide: step 7/7. Joins adenosylcobinamide-GDP and alpha-ribazole to generate adenosylcobalamin (Ado-cobalamin). Also synthesizes adenosylcobalamin 5'-phosphate from adenosylcobinamide-GDP and alpha-ribazole 5'-phosphate. In Listeria monocytogenes serovar 1/2a (strain ATCC BAA-679 / EGD-e), this protein is Adenosylcobinamide-GDP ribazoletransferase.